Reading from the N-terminus, the 499-residue chain is Hepatic triacylglycerol lipase (499 aa).

A signal peptide spans 1–22 (MDTSPLCFSILLVLCIFIQSSA). N-linked (GlcNAc...) asparagine glycosylation is found at Asn-42 and Asn-78. Ser-168 serves as the catalytic Nucleophile. The Charge relay system role is filled by Asp-194. Residues 254-277 (CHFLELYRHIAQHGFNAITQTIKC) form an essential for determining substrate specificity region. His-279 (charge relay system) is an active-site residue. The 135-residue stretch at 352-486 (YHYQFKIQFI…RPTQEKIFVK (135 aa)) folds into the PLAT domain. N-linked (GlcNAc...) asparagine glycans are attached at residues Asn-362 and Asn-397.

This sequence belongs to the AB hydrolase superfamily. Lipase family. In terms of assembly, homodimer.

Its subcellular location is the secreted. It carries out the reaction a triacylglycerol + H2O = a diacylglycerol + a fatty acid + H(+). It catalyses the reaction a 1-acyl-sn-glycero-3-phosphocholine + H2O = sn-glycerol 3-phosphocholine + a fatty acid + H(+). The enzyme catalyses a 1,2-diacyl-sn-glycero-3-phosphocholine + H2O = a 2-acyl-sn-glycero-3-phosphocholine + a fatty acid + H(+). The catalysed reaction is 1,2,3-tri-(9Z-octadecenoyl)-glycerol + H2O = di-(9Z)-octadecenoylglycerol + (9Z)-octadecenoate + H(+). It carries out the reaction 1,2-di-(9Z-octadecenoyl)-sn-glycero-3-phosphocholine + H2O = (9Z-octadecenoyl)-sn-glycero-3-phosphocholine + (9Z)-octadecenoate + H(+). It catalyses the reaction 1,2,3-tributanoylglycerol + H2O = dibutanoylglycerol + butanoate + H(+). The enzyme catalyses 1,2-dihexadecanoyl-sn-glycero-3-phosphocholine + H2O = hexadecanoyl-sn-glycero-3-phosphocholine + hexadecanoate + H(+). The catalysed reaction is 1,2-di-(9Z-octadecenoyl)-sn-glycerol + H2O = 2-(9Z-octadecenoyl)-glycerol + (9Z)-octadecenoate + H(+). It carries out the reaction 1,2,3-tri-(9Z-octadecenoyl)-glycerol + H2O = 2,3-di-(9Z)-octadecenoyl-sn-glycerol + (9Z)-octadecenoate + H(+). It catalyses the reaction 1-(9Z-octadecenoyl)-sn-glycero-3-phospho-L-serine + H2O = sn-glycero-3-phospho-L-serine + (9Z)-octadecenoate + H(+). The enzyme catalyses 1-hexadecanoyl-sn-glycero-3-phosphocholine + H2O = sn-glycerol 3-phosphocholine + hexadecanoate + H(+). The catalysed reaction is 1,3-di-(9Z-octadecenoyl)-glycerol + H2O = 3-(9Z-octadecenoyl)-sn-glycerol + (9Z)-octadecenoate + H(+). With respect to regulation, phospholipase A1 and triacylglycerol lipase are inhibited by sphingomyelin. In terms of biological role, catalyzes the hydrolysis of triglycerides and phospholipids present in circulating plasma lipoproteins, including chylomicrons, intermediate density lipoproteins (IDL), low density lipoproteins (LDL) of large size and high density lipoproteins (HDL), releasing free fatty acids (FFA) and smaller lipoprotein particles. Also exhibits lysophospholipase activity. Can hydrolyze both neutral lipid and phospholipid substrates but shows a greater binding affinity for neutral lipid substrates than phospholipid substrates. In native LDL, preferentially hydrolyzes the phosphatidylcholine species containing polyunsaturated fatty acids at sn-2 position. The protein is Hepatic triacylglycerol lipase (LIPC) of Homo sapiens (Human).